We begin with the raw amino-acid sequence, 444 residues long: E1B 55 kDa protein (444 aa).

A disordered region spans residues 1–27 (MEQDSDLESGRATNQRPPRVRVRGAGV). Phosphoserine occurs at positions 438 and 439.

It belongs to the adenoviridae E1B 55 kDa protein family. As to quaternary structure, interacts with host PML-4 and PML-5; this interaction promotes efficient subnuclear targeting of E1B-55K to PML nuclear bodies. Interacts with E4-ORF3 protein. Interacts with E4-ORF6 protein.

It is found in the host nucleus. The protein localises to the host cytoplasm. Its function is as follows. Plays a major role to prevent cellular inhibition of viral genome replication. Assembles an SCF-like E3 ubiquitin ligase complex based on the cellular proteins ELOB, ELOC, CUL5 and RBX1, in cooperation with viral E4orf6. This viral RING-type ligase ubiquitinates cellular substrates and targets them to proteasomal degradation: TP53/p53, LIG4, MRE11-RAD50-NBS1 (MRN) complex, ITGA3, DAXX and BLM. E1B-55K probably acts as the substrate-specific adapter of the SCF-like E3 ubiquitin ligase complex. Degradation of host TP53/p53 activity is essential for preventing E1A-induced TP53 accumulation that would otherwise lead to cell apoptosis and growth arrest. E1B-55K also inactivates TP53 transcription-factor activity by binding its transactivation domain. E1B-55K also functions as a SUMO1 E3 ligase for TP53 which causes the latter to be sequestered in promyelocytic leukemia (PML) nuclear bodies thereby contributing to maximal inhibition of TP53 function. In Canis lupus familiaris (Dog), this protein is E1B 55 kDa protein.